Consider the following 860-residue polypeptide: Alanine--tRNA ligase (860 aa).

Zn(2+)-binding residues include His-563, His-567, Cys-665, and His-669.

Belongs to the class-II aminoacyl-tRNA synthetase family. The cofactor is Zn(2+).

It localises to the cytoplasm. It catalyses the reaction tRNA(Ala) + L-alanine + ATP = L-alanyl-tRNA(Ala) + AMP + diphosphate. Functionally, catalyzes the attachment of alanine to tRNA(Ala) in a two-step reaction: alanine is first activated by ATP to form Ala-AMP and then transferred to the acceptor end of tRNA(Ala). Also edits incorrectly charged Ser-tRNA(Ala) and Gly-tRNA(Ala) via its editing domain. This chain is Alanine--tRNA ligase, found in Vibrio cholerae serotype O1 (strain ATCC 39315 / El Tor Inaba N16961).